The chain runs to 451 residues: MTTLPAPTISTTAELRALLRLAGPVVVSQFAANALALIATAVIGRLGERELAAAAYANAAYYLVFIMVVGVMLSVAPRVAQAHGAGDARGVARALGGGLRLALLLSAVMLPLMWALSFVLPNFAPAGVSRDLVAAYLRVYSLGMLPNLAFIALRGTLEGTGKPGAVTGVALTGVVWALLVAPALAFGWGPLPRLGLAGAAGASASAAWIMAALLWPLARRRVAYAGPLGPLGDEVRALFRLGWPIGLTLGAEGGMFSVTTLLMARFGPEVLAAHNVTMQTITAFFMVPLGIASATGVRVGTEAGAGRLAQARRAGLVGLGLSSAVMLTFAVIELAAPRTVFSVFVNVNDPANAGLIAAATGFLSIAALFQLMDGLQVTANGALRGLQDTRVPLLVSLVAYWVVGLGLGSVLSSVAGLGARGLWFGLTAGLTLAGLSLVGRFLYRTRAGRAA.

12 helical membrane-spanning segments follow: residues 23–43 (GPVV…TAVI), 53–73 (AAAY…GVML), 101–121 (LALL…FVLP), 132–152 (LVAA…AFIA), 169–189 (VALT…FGWG), 194–214 (LGLA…AALL), 243–263 (WPIG…TLLM), 277–297 (TMQT…ATGV), 316–336 (LVGL…ELAA), 355–375 (LIAA…MDGL), 391–411 (VPLL…GSVL), and 422–442 (LWFG…GRFL).

This sequence belongs to the multi antimicrobial extrusion (MATE) (TC 2.A.66.1) family.

Its subcellular location is the cell membrane. Functionally, multidrug efflux pump. This Deinococcus radiodurans (strain ATCC 13939 / DSM 20539 / JCM 16871 / CCUG 27074 / LMG 4051 / NBRC 15346 / NCIMB 9279 / VKM B-1422 / R1) protein is Probable multidrug resistance protein NorM (norM).